The primary structure comprises 559 residues: NAD(P)H-quinone oxidoreductase chain 4-2 (559 aa).

The next 14 helical transmembrane spans lie at 5–25 (FPWL…IPLI), 35–55 (WYAL…FWTN), 86–106 (ISMP…FAAW), 114–134 (LFYF…VAQD), 136–156 (LLLF…VCIW), 168–188 (FLLY…GLAF), 207–227 (IALE…KLAI), 242–262 (SAPV…YGLI), 274–294 (VYFA…GGFS), 310–330 (VSHM…GISG), 331–351 (AMLQ…LAGV), 374–394 (VFAL…MSGF), 417–437 (VTVF…LSML), and 488–508 (VFIA…PKLA).

Belongs to the complex I subunit 4 family.

The protein localises to the cellular thylakoid membrane. It carries out the reaction a plastoquinone + NADH + (n+1) H(+)(in) = a plastoquinol + NAD(+) + n H(+)(out). The catalysed reaction is a plastoquinone + NADPH + (n+1) H(+)(in) = a plastoquinol + NADP(+) + n H(+)(out). Its function is as follows. NDH-1 shuttles electrons from NAD(P)H, via FMN and iron-sulfur (Fe-S) centers, to quinones in the respiratory chain. The immediate electron acceptor for the enzyme in this species is believed to be plastoquinone. Couples the redox reaction to proton translocation (for every two electrons transferred, four hydrogen ions are translocated across the cytoplasmic membrane), and thus conserves the redox energy in a proton gradient. The sequence is that of NAD(P)H-quinone oxidoreductase chain 4-2 (ndhD2) from Synechocystis sp. (strain ATCC 27184 / PCC 6803 / Kazusa).